A 737-amino-acid chain; its full sequence is MWLLLLLLSGLSRLGGLSEPQTEGTREKLHVQVTVPEKIRSITSEGYETQVTYSLKIEGKTYILNLMQKAFLPPNFRVYSYDSTGIMRPLEQKFQNICYFQGYIEGYPNSMVIVSTCTGLRGVLQFGNVSYGIEPLESSSGFEHVIYQVEPKKGDTLLYAEKDMDLRDPQYKIRSIKPQRTVSHYLEIHIVVEKQMFEHIGADTAVVTQKIFQLIGLTNAIFAPFNLTVILSSLEFWMDENKISTTGDANKLLYRFLKWKQSYLVLRPHDMAFLLVYRDTTDYVGATYQGKMCDKNYAGGVALHPKAVTLESLAIILVQLLSLSMGVAYDDVNTCQCGVPICVMNPEALHSSGVRSFSNCSMEDFSKFIVSQSSHCLQNQPHLQPSYKMAVCGNGELEEGEVCDCGQEGCDDKPPPCCNPTTCQLSEGSTCSTGSCCDASCNLKAKGELCRPANQECDVTEYCNGTSEVCEEDFFVQDGHPCAEQKWICINGTCQSGAQQCRDLFGTDADYGTKECYSELNSKSDISGSCGITPTGYKDCAPNDRMCGKLICIYQSEDILKMRSAIVIYANISGQICISLEYPPGHKESKKMCVRDGTVCGSGKVCLNQECVEDTFLNYDCTPEKCNHHGVCNNKKHCHCEPTYLPPDCKNTEDTWPGGSVDSGNQQRAESIPARSYVASAYRSKSARWPFFLIIPFYVVILVLIGMLVKVYSQRKKWRMDDFSSEEQFESESESKD.

The N-terminal stretch at 1-18 (MWLLLLLLSGLSRLGGLS) is a signal peptide. Residues 19–180 (EPQTEGTREK…YKIRSIKPQR (162 aa)) constitute a propeptide that is removed on maturation. The Extracellular segment spans residues 19 to 688 (EPQTEGTREK…ASAYRSKSAR (670 aa)). 2 N-linked (GlcNAc...) asparagine glycosylation sites follow: asparagine 128 and asparagine 226. Residues 184 to 381 (HYLEIHIVVE…QSSHCLQNQP (198 aa)) form the Peptidase M12B domain. Intrachain disulfides connect cysteine 293-cysteine 376, cysteine 335-cysteine 360, cysteine 337-cysteine 342, and cysteine 450-cysteine 470. N-linked (GlcNAc...) asparagine glycosylation is found at asparagine 359, asparagine 464, asparagine 491, and asparagine 571. Positions 389–478 (MAVCGNGELE…VCEEDFFVQD (90 aa)) constitute a Disintegrin domain. One can recognise an EGF-like domain in the interval 617 to 650 (LNYDCTPEKCNHHGVCNNKKHCHCEPTYLPPDCK). 3 cysteine pairs are disulfide-bonded: cysteine 621–cysteine 632, cysteine 626–cysteine 638, and cysteine 640–cysteine 649. A helical transmembrane segment spans residues 689–709 (WPFFLIIPFYVVILVLIGMLV). Residues 710-737 (KVYSQRKKWRMDDFSSEEQFESESESKD) are Cytoplasmic-facing. Phosphoserine is present on serine 731.

In terms of assembly, heterodimer with ADAM1/fertilin subunit alpha. In terms of processing, the prodomain and the metalloprotease domain are cleaved during the epididymal maturation of the spermatozoa.

The protein localises to the membrane. Sperm surface membrane protein that may be involved in sperm-egg plasma membrane adhesion and fusion during fertilization. Could have a direct role in sperm-zona binding or migration of sperm from the uterus into the oviduct. Interactions with egg membrane could be mediated via binding between its disintegrin-like domain to one or more integrins receptors on the egg. This is a non catalytic metalloprotease-like protein. The chain is Disintegrin and metalloproteinase domain-containing protein 2 (Adam2) from Rattus norvegicus (Rat).